The primary structure comprises 694 residues: ATP-dependent RNA helicase DHX33 (694 aa).

The region spanning 78–246 (LKELEANDTV…FNCKGMYLEG (169 aa)) is the Helicase ATP-binding domain. 91 to 98 (SETGSGKT) contacts ATP. The short motif at 188-191 (DEAH) is the DEAH box element. A Helicase C-terminal domain is found at 270–443 (TLFHIHRTTP…SMVLQLLALD (174 aa)).

The protein belongs to the DEAD box helicase family. DEAH subfamily.

It is found in the nucleus. Its subcellular location is the nucleolus. The catalysed reaction is ATP + H2O = ADP + phosphate + H(+). Its function is as follows. Part of a translational control module, also containing pths/DDX47 and ais/DDX52, which coordinates germline stem cell differentiation with ribosome biogenesis during oogenesis. This module allows for coregulation of ribosomal proteins and non1/GTPBP4, a p53 repressor, preventing p53 stabilization, cell cycle arrest and loss of stem cell differentiation. The sequence is that of ATP-dependent RNA helicase DHX33 from Drosophila melanogaster (Fruit fly).